The sequence spans 376 residues: Queuine tRNA-ribosyltransferase (376 aa).

Residue aspartate 89 is the Proton acceptor of the active site. Residues 89–93, aspartate 143, glutamine 194, and glycine 221 contribute to the substrate site; that span reads DSGGF. The tract at residues 252–258 is RNA binding; that stretch reads GVGIPSN. Residue aspartate 271 is the Nucleophile of the active site. The RNA binding; important for wobble base 34 recognition stretch occupies residues 276–280; the sequence is ARNGR. Residues cysteine 309, cysteine 311, cysteine 314, and histidine 340 each contribute to the Zn(2+) site.

Belongs to the queuine tRNA-ribosyltransferase family. Homodimer. Within each dimer, one monomer is responsible for RNA recognition and catalysis, while the other monomer binds to the replacement base PreQ1. It depends on Zn(2+) as a cofactor.

The catalysed reaction is 7-aminomethyl-7-carbaguanine + guanosine(34) in tRNA = 7-aminomethyl-7-carbaguanosine(34) in tRNA + guanine. It participates in tRNA modification; tRNA-queuosine biosynthesis. In terms of biological role, catalyzes the base-exchange of a guanine (G) residue with the queuine precursor 7-aminomethyl-7-deazaguanine (PreQ1) at position 34 (anticodon wobble position) in tRNAs with GU(N) anticodons (tRNA-Asp, -Asn, -His and -Tyr). Catalysis occurs through a double-displacement mechanism. The nucleophile active site attacks the C1' of nucleotide 34 to detach the guanine base from the RNA, forming a covalent enzyme-RNA intermediate. The proton acceptor active site deprotonates the incoming PreQ1, allowing a nucleophilic attack on the C1' of the ribose to form the product. After dissociation, two additional enzymatic reactions on the tRNA convert PreQ1 to queuine (Q), resulting in the hypermodified nucleoside queuosine (7-(((4,5-cis-dihydroxy-2-cyclopenten-1-yl)amino)methyl)-7-deazaguanosine). This Clostridium botulinum (strain Kyoto / Type A2) protein is Queuine tRNA-ribosyltransferase.